The sequence spans 397 residues: Putative nickel insertion protein (397 aa).

This sequence belongs to the LarC family.

The sequence is that of Putative nickel insertion protein from Synechococcus sp. (strain JA-2-3B'a(2-13)) (Cyanobacteria bacterium Yellowstone B-Prime).